The sequence spans 429 residues: Histidinol dehydrogenase (429 aa).

NAD(+)-binding residues include Tyr-127, Gln-188, and Asn-211. Residues Ser-234, Gln-256, and His-259 each coordinate substrate. Zn(2+) contacts are provided by Gln-256 and His-259. Active-site proton acceptor residues include Glu-324 and His-325. 4 residues coordinate substrate: His-325, Asp-358, Glu-412, and His-417. Position 358 (Asp-358) interacts with Zn(2+). Residue His-417 participates in Zn(2+) binding.

It belongs to the histidinol dehydrogenase family. The cofactor is Zn(2+).

It carries out the reaction L-histidinol + 2 NAD(+) + H2O = L-histidine + 2 NADH + 3 H(+). Its pathway is amino-acid biosynthesis; L-histidine biosynthesis; L-histidine from 5-phospho-alpha-D-ribose 1-diphosphate: step 9/9. In terms of biological role, catalyzes the sequential NAD-dependent oxidations of L-histidinol to L-histidinaldehyde and then to L-histidine. This Bacillus cereus (strain ATCC 10987 / NRS 248) protein is Histidinol dehydrogenase.